The primary structure comprises 34 residues: Small, acid-soluble spore protein M (34 aa).

Basic residues predominate over residues 1 to 10 (MKTRPKKAGQ). The disordered stretch occupies residues 1-34 (MKTRPKKAGQQKKTESKAIDSLDKKLGGPNRPST). Basic and acidic residues predominate over residues 12-26 (KKTESKAIDSLDKKL).

The protein resides in the spore core. The polypeptide is Small, acid-soluble spore protein M (sspM) (Bacillus subtilis (strain 168)).